Here is a 214-residue protein sequence, read N- to C-terminus: Protein-L-isoaspartate O-methyltransferase (214 aa).

The active site involves Ser-63.

The protein belongs to the methyltransferase superfamily. L-isoaspartyl/D-aspartyl protein methyltransferase family.

It localises to the cytoplasm. It catalyses the reaction [protein]-L-isoaspartate + S-adenosyl-L-methionine = [protein]-L-isoaspartate alpha-methyl ester + S-adenosyl-L-homocysteine. In terms of biological role, catalyzes the methyl esterification of L-isoaspartyl residues in peptides and proteins that result from spontaneous decomposition of normal L-aspartyl and L-asparaginyl residues. It plays a role in the repair and/or degradation of damaged proteins. The polypeptide is Protein-L-isoaspartate O-methyltransferase (Maridesulfovibrio salexigens (strain ATCC 14822 / DSM 2638 / NCIMB 8403 / VKM B-1763) (Desulfovibrio salexigens)).